Reading from the N-terminus, the 193-residue chain is Orotate phosphoribosyltransferase (193 aa).

114–122 (EDVITTGGS) is a 5-phospho-alpha-D-ribose 1-diphosphate binding site. Orotate contacts are provided by threonine 118 and arginine 146.

The protein belongs to the purine/pyrimidine phosphoribosyltransferase family. PyrE subfamily. Homodimer. Mg(2+) serves as cofactor.

The catalysed reaction is orotidine 5'-phosphate + diphosphate = orotate + 5-phospho-alpha-D-ribose 1-diphosphate. The protein operates within pyrimidine metabolism; UMP biosynthesis via de novo pathway; UMP from orotate: step 1/2. In terms of biological role, catalyzes the transfer of a ribosyl phosphate group from 5-phosphoribose 1-diphosphate to orotate, leading to the formation of orotidine monophosphate (OMP). The sequence is that of Orotate phosphoribosyltransferase from Chlorobaculum parvum (strain DSM 263 / NCIMB 8327) (Chlorobium vibrioforme subsp. thiosulfatophilum).